Reading from the N-terminus, the 172-residue chain is Translation initiation factor IF-3 (172 aa).

Belongs to the IF-3 family. In terms of assembly, monomer.

It is found in the cytoplasm. In terms of biological role, IF-3 binds to the 30S ribosomal subunit and shifts the equilibrium between 70S ribosomes and their 50S and 30S subunits in favor of the free subunits, thus enhancing the availability of 30S subunits on which protein synthesis initiation begins. In Haemophilus influenzae (strain ATCC 51907 / DSM 11121 / KW20 / Rd), this protein is Translation initiation factor IF-3.